A 101-amino-acid chain; its full sequence is Small ribosomal subunit protein uS14 (101 aa).

It belongs to the universal ribosomal protein uS14 family. As to quaternary structure, part of the 30S ribosomal subunit. Contacts proteins S3 and S10.

In terms of biological role, binds 16S rRNA, required for the assembly of 30S particles and may also be responsible for determining the conformation of the 16S rRNA at the A site. The polypeptide is Small ribosomal subunit protein uS14 (Alteromonas mediterranea (strain DSM 17117 / CIP 110805 / LMG 28347 / Deep ecotype)).